Consider the following 539-residue polypeptide: Putative cysteine ligase BshC (539 aa).

Residues 249-270 (VETNDEVTNRLNESQAAMKRAG) adopt a coiled-coil conformation.

Belongs to the BshC family.

In terms of biological role, involved in bacillithiol (BSH) biosynthesis. May catalyze the last step of the pathway, the addition of cysteine to glucosamine malate (GlcN-Mal) to generate BSH. The sequence is that of Putative cysteine ligase BshC from Bacillus pumilus (strain SAFR-032).